The following is a 203-amino-acid chain: Molybdenum cofactor guanylyltransferase (203 aa).

Residues 20 to 22, K33, N61, D78, and D108 contribute to the GTP site; that span reads LAG. D108 contributes to the Mg(2+) binding site.

It belongs to the MobA family. Monomer. It depends on Mg(2+) as a cofactor.

The protein resides in the cytoplasm. It carries out the reaction Mo-molybdopterin + GTP + H(+) = Mo-molybdopterin guanine dinucleotide + diphosphate. In terms of biological role, transfers a GMP moiety from GTP to Mo-molybdopterin (Mo-MPT) cofactor (Moco or molybdenum cofactor) to form Mo-molybdopterin guanine dinucleotide (Mo-MGD) cofactor. This Vibrio cholerae serotype O1 (strain ATCC 39315 / El Tor Inaba N16961) protein is Molybdenum cofactor guanylyltransferase.